The sequence spans 121 residues: Holo-[acyl-carrier-protein] synthase (121 aa).

Mg(2+)-binding residues include aspartate 6 and glutamate 55.

This sequence belongs to the P-Pant transferase superfamily. AcpS family. Mg(2+) serves as cofactor.

It is found in the cytoplasm. It catalyses the reaction apo-[ACP] + CoA = holo-[ACP] + adenosine 3',5'-bisphosphate + H(+). Functionally, transfers the 4'-phosphopantetheine moiety from coenzyme A to a Ser of acyl-carrier-protein. The sequence is that of Holo-[acyl-carrier-protein] synthase from Chloroherpeton thalassium (strain ATCC 35110 / GB-78).